Consider the following 101-residue polypeptide: Small ribosomal subunit protein uS14 (101 aa).

The protein belongs to the universal ribosomal protein uS14 family. As to quaternary structure, part of the 30S ribosomal subunit. Contacts proteins S3 and S10.

Its function is as follows. Binds 16S rRNA, required for the assembly of 30S particles and may also be responsible for determining the conformation of the 16S rRNA at the A site. This chain is Small ribosomal subunit protein uS14, found in Actinobacillus pleuropneumoniae serotype 3 (strain JL03).